A 231-amino-acid chain; its full sequence is Insertion sequence IS1162 putative ATP-binding protein (231 aa).

107–114 (GPTGVGKT) is an ATP binding site.

Belongs to the IS21/IS1162 putative ATP-binding protein family.

The sequence is that of Insertion sequence IS1162 putative ATP-binding protein from Pseudomonas fluorescens.